Reading from the N-terminus, the 775-residue chain is Polyribonucleotide nucleotidyltransferase (775 aa).

Positions 487 and 493 each coordinate Mg(2+). The region spanning 554–613 is the KH domain; that stretch reads PKVEVVDVPEEKAPLIIGPGGSTVKKIYDETGVKVWVGEQGKVYLFVFPGGDVEKAKQMI. S1 motif domains follow at residues 623–693 and 707–775; these read GAVY…IGIE and GDVY…TDDV.

Belongs to the polyribonucleotide nucleotidyltransferase family. The cofactor is Mg(2+).

It localises to the cytoplasm. It catalyses the reaction RNA(n+1) + phosphate = RNA(n) + a ribonucleoside 5'-diphosphate. Involved in mRNA degradation. Catalyzes the phosphorolysis of single-stranded polyribonucleotides processively in the 3'- to 5'-direction. This chain is Polyribonucleotide nucleotidyltransferase, found in Aquifex aeolicus (strain VF5).